The following is a 157-amino-acid chain: Transcriptional repressor NrdR (157 aa).

The tract at residues 1–21 (MRCPYCSSEDSQVKDSRPAED) is disordered. Residues 3-34 (CPYCSSEDSQVKDSRPAEDGNAIRRRRICPDC) fold into a zinc finger. Residues 11–21 (SQVKDSRPAED) show a composition bias toward basic and acidic residues. The region spanning 49–139 (LMIIKKTGRK…VYRDFSHAED (91 aa)) is the ATP-cone domain.

This sequence belongs to the NrdR family. Zn(2+) serves as cofactor.

Its function is as follows. Negatively regulates transcription of bacterial ribonucleotide reductase nrd genes and operons by binding to NrdR-boxes. This chain is Transcriptional repressor NrdR, found in Sinorhizobium fredii (strain NBRC 101917 / NGR234).